Consider the following 234-residue polypeptide: AA9 family lytic polysaccharide monooxygenase D (234 aa).

An N-terminal signal peptide occupies residues 1–18 (MRIEKLLNAALLAGAVSA). Positions 19 and 95 each coordinate Cu(2+). C57 and C182 are disulfide-bonded. Residues H168 and Q177 each contribute to the O2 site. Y179 provides a ligand contact to Cu(2+).

The protein belongs to the polysaccharide monooxygenase AA9 family. Cu(2+) is required as a cofactor.

It is found in the secreted. It catalyses the reaction [(1-&gt;4)-beta-D-glucosyl]n+m + reduced acceptor + O2 = 4-dehydro-beta-D-glucosyl-[(1-&gt;4)-beta-D-glucosyl]n-1 + [(1-&gt;4)-beta-D-glucosyl]m + acceptor + H2O.. Lytic polysaccharide monooxygenase (LPMO) that depolymerizes crystalline and amorphous polysaccharides via the oxidation of scissile alpha- or beta-(1-4)-glycosidic bonds, yielding C1 or C4 oxidation products. Catalysis by LPMOs requires the reduction of the active-site copper from Cu(II) to Cu(I) by a reducing agent and H(2)O(2) or O(2) as a cosubstrate. The sequence is that of AA9 family lytic polysaccharide monooxygenase D from Malbranchea cinnamomea (Thermophilic fungus).